Consider the following 485-residue polypeptide: Rhamnulokinase (485 aa).

Residue 12–16 (ATSGR) coordinates ATP. Substrate is bound by residues Gly80 and 238-240 (HDT). The Proton acceptor role is filled by Asp239. Residue Thr261 participates in ATP binding. Asn298 provides a ligand contact to substrate. An ATP-binding site is contributed by Glu306. Cysteines 355 and 372 form a disulfide. ATP is bound at residue Gly404.

Belongs to the rhamnulokinase family. It depends on Mg(2+) as a cofactor.

It catalyses the reaction L-rhamnulose + ATP = L-rhamnulose 1-phosphate + ADP + H(+). Its pathway is carbohydrate degradation; L-rhamnose degradation; glycerone phosphate from L-rhamnose: step 2/3. Involved in the catabolism of L-rhamnose (6-deoxy-L-mannose). Catalyzes the transfer of the gamma-phosphate group from ATP to the 1-hydroxyl group of L-rhamnulose to yield L-rhamnulose 1-phosphate. The polypeptide is Rhamnulokinase (Bacteroides thetaiotaomicron (strain ATCC 29148 / DSM 2079 / JCM 5827 / CCUG 10774 / NCTC 10582 / VPI-5482 / E50)).